A 329-amino-acid polypeptide reads, in one-letter code: Mas-related G-protein coupled receptor member X2 (329 aa).

The Extracellular segment spans residues 1 to 33; that stretch reads MDPTTPAWGTESTTMDGNDQSLPLLCDKEALIP. The chain crosses the membrane as a helical span at residues 34–54; sequence VFLILFIALVGLVGNGFVLWL. Over 55–63 the chain is Cytoplasmic; it reads LGFRMSRNA. The helical transmembrane segment at 64–84 threads the bilayer; it reads FSVYVLSLAGADFLFLCFQII. Topologically, residues 85 to 96 are extracellular; that stretch reads NCLVYLRDFFCS. A helical membrane pass occupies residues 97-117; that stretch reads ISINFPSXFTTVMTCAYLAGL. Over 118–144 the chain is Cytoplasmic; sequence SMLSTISTERCLSVLWPIWYRCRRPRH. Residues 145–165 form a helical membrane-spanning segment; the sequence is LSAVVCVLLWALSLLLSILEG. At 166–184 the chain is on the extracellular side; sequence KFCGFLFSDGDFGWCQIFD. Residues 185 to 205 form a helical membrane-spanning segment; the sequence is FITAAWLIFLFVVLCASSLAL. At 206-228 the chain is on the cytoplasmic side; that stretch reads LVRILCGSRGLPLTRLYLTILLT. The helical transmembrane segment at 229–249 threads the bilayer; that stretch reads VLVFLLCGLPFGIQWFLILGF. Residues 250–263 lie on the Extracellular side of the membrane; sequence WNSDVLLCHIHLVS. Residues 264-284 traverse the membrane as a helical segment; that stretch reads VVLSSLNSSANPIIYFFVGSF. Over 285–329 the chain is Cytoplasmic; sequence RKQWRLQQPILKLAFQRALQDTAEVDHSEGCFPQGTSEMSRSSLV.

Belongs to the G-protein coupled receptor 1 family. Mas subfamily.

Its subcellular location is the cell membrane. In terms of biological role, mast cell-specific receptor for basic secretagogues, i.e. cationic amphiphilic drugs, as well as endo- or exogenous peptides, consisting of a basic head group and a hydrophobic core. Recognizes and binds small molecules containing a cyclized tetrahydroisoquinoline (THIQ), such as non-steroidal neuromuscular blocking drugs (NMBDs), including tubocurarine and atracurium. In response to these compounds, mediates pseudo-allergic reactions characterized by histamine release, inflammation and airway contraction. The sequence is that of Mas-related G-protein coupled receptor member X2 (MRGPRX2) from Hoolock hoolock (Western hoolock gibbon).